The sequence spans 344 residues: Phosphate acyltransferase (344 aa).

Belongs to the PlsX family. As to quaternary structure, homodimer. Probably interacts with PlsY.

Its subcellular location is the cytoplasm. It catalyses the reaction a fatty acyl-[ACP] + phosphate = an acyl phosphate + holo-[ACP]. Its pathway is lipid metabolism; phospholipid metabolism. Catalyzes the reversible formation of acyl-phosphate (acyl-PO(4)) from acyl-[acyl-carrier-protein] (acyl-ACP). This enzyme utilizes acyl-ACP as fatty acyl donor, but not acyl-CoA. This Acaryochloris marina (strain MBIC 11017) protein is Phosphate acyltransferase.